The following is a 212-amino-acid chain: Large ribosomal subunit protein uL4 (212 aa).

Positions 54–65 (SQKSRSDVSGSN) are enriched in polar residues. The segment at 54 to 85 (SQKSRSDVSGSNKKPWRQKGTGRARSGSVKSP) is disordered.

It belongs to the universal ribosomal protein uL4 family. Part of the 50S ribosomal subunit.

One of the primary rRNA binding proteins, this protein initially binds near the 5'-end of the 23S rRNA. It is important during the early stages of 50S assembly. It makes multiple contacts with different domains of the 23S rRNA in the assembled 50S subunit and ribosome. In terms of biological role, forms part of the polypeptide exit tunnel. The chain is Large ribosomal subunit protein uL4 from Blochmanniella floridana.